The following is a 93-amino-acid chain: MSRSVKKGPYVLDSLLKKIEEMNKANDKKVIKTWSRASTIFPQMVGHTIAVHDGKKHVPVYITEDMVGHKLGEFAPTRTYKGHSGNEKSTSLR.

The protein belongs to the universal ribosomal protein uS19 family.

In terms of biological role, protein S19 forms a complex with S13 that binds strongly to the 16S ribosomal RNA. The polypeptide is Small ribosomal subunit protein uS19 (Ruminiclostridium cellulolyticum (strain ATCC 35319 / DSM 5812 / JCM 6584 / H10) (Clostridium cellulolyticum)).